A 308-amino-acid chain; its full sequence is MFHDLLEFNEEVLDAINDKNPIVALESTIISHGMPYPDNLTTAIEVENIIRRQGAIPATIAMHQGKIRVGLTQEVMEHLALQKEVIKASRRDISFVLSRKVTASTTVAATMFCAHMAKLPLFVTGGIGGVHQDVTMSFDISADLIELSNTPVTVVCSGAKSILDLPKTLEVLETFGVPVIGYATDEFPAFYSRSSGIPVPQRLNSAEEVANLMSIQQKLNMKNGIVVANPIPVSAELSDEEISPYIKQAHDEAKHMSGKSLTPFLLKRIAELTAGKSLEANIELIKNNAFLGAEIAIAYQKKLFSKKT.

Residue Glu-26 is the Proton donor of the active site. Lys-87 and Val-107 together coordinate substrate. Asp-139 contacts Mn(2+). Residue 141–143 participates in substrate binding; that stretch reads SAD. Lys-160 serves as the catalytic Nucleophile.

It belongs to the pseudouridine-5'-phosphate glycosidase family. In terms of assembly, homotrimer. The cofactor is Mn(2+).

The enzyme catalyses D-ribose 5-phosphate + uracil = psi-UMP + H2O. Catalyzes the reversible cleavage of pseudouridine 5'-phosphate (PsiMP) to ribose 5-phosphate and uracil. Functions biologically in the cleavage direction, as part of a pseudouridine degradation pathway. In Legionella pneumophila subsp. pneumophila (strain Philadelphia 1 / ATCC 33152 / DSM 7513), this protein is Pseudouridine-5'-phosphate glycosidase.